Here is a 364-residue protein sequence, read N- to C-terminus: Phosphoserine aminotransferase (364 aa).

Arg-42 is a binding site for L-glutamate. Pyridoxal 5'-phosphate is bound by residues 76 to 77, Trp-102, Thr-156, Asp-175, and Gln-198; that span reads GR. Lys-199 is modified (N6-(pyridoxal phosphate)lysine). 240-241 is a pyridoxal 5'-phosphate binding site; sequence NT.

The protein belongs to the class-V pyridoxal-phosphate-dependent aminotransferase family. SerC subfamily. Homodimer. It depends on pyridoxal 5'-phosphate as a cofactor.

Its subcellular location is the cytoplasm. The enzyme catalyses O-phospho-L-serine + 2-oxoglutarate = 3-phosphooxypyruvate + L-glutamate. It carries out the reaction 4-(phosphooxy)-L-threonine + 2-oxoglutarate = (R)-3-hydroxy-2-oxo-4-phosphooxybutanoate + L-glutamate. It participates in amino-acid biosynthesis; L-serine biosynthesis; L-serine from 3-phospho-D-glycerate: step 2/3. It functions in the pathway cofactor biosynthesis; pyridoxine 5'-phosphate biosynthesis; pyridoxine 5'-phosphate from D-erythrose 4-phosphate: step 3/5. In terms of biological role, catalyzes the reversible conversion of 3-phosphohydroxypyruvate to phosphoserine and of 3-hydroxy-2-oxo-4-phosphonooxybutanoate to phosphohydroxythreonine. In Shewanella sediminis (strain HAW-EB3), this protein is Phosphoserine aminotransferase.